A 372-amino-acid chain; its full sequence is MGFHSKNNSEYNGDFIILSSIYYWMILLYCIKFFLSKYLIYCMSLTYIDLFSGAGGFSLGFDRAGFHQLLSVEIEPHYCDTYRANFPDHQVLQQDLTTLSDDNLLRHINHRKVDVVIGGPPCQGFSMAGKIGRTFADDPRNHLFKEFVRVVKLTQPKFFVMENVARLFTHNSGKTRAEITEQFERLGYKVKCKVLNAADFGVPQLRSRIVFIGRKDGGEITFPEPSHTEYNTVGDAIGHFPKLNAGENSLILNHEAMNHSTQMLEKMSFVKNGGDRNDIPESLRPISGDVRKYIRYHSDKPSVCVTGDMRKVFHYEQNRALTVRELAALQSFPDDFVFLGKKIAQQQQVGNAVPPLLAQAIAEAVLKMNTNE.

Residues 45 to 372 (LTYIDLFSGA…EAVLKMNTNE (328 aa)) enclose the SAM-dependent MTase C5-type domain. The active site involves Cys-122.

The protein belongs to the class I-like SAM-binding methyltransferase superfamily. C5-methyltransferase family.

It catalyses the reaction a 2'-deoxycytidine in DNA + S-adenosyl-L-methionine = a 5-methyl-2'-deoxycytidine in DNA + S-adenosyl-L-homocysteine + H(+). Its function is as follows. A methylase that recognizes the double-stranded sequence 5'-GGTGA-3' and protects the DNA from cleavage by the HphI endonuclease. Probably methylates C-2 on the bottom strand. The sequence is that of Type II methyltransferase M1.HphI (hphIAM) from Haemophilus parahaemolyticus.